Reading from the N-terminus, the 88-residue chain is Mini zinc finger protein 3 (88 aa).

The segment at 26–72 adopts a ZF-HD dimerization-type; degenerate zinc-finger fold; it reads YVECQKNHAANIGGYAVDGCREFMASGGDDALTCAACGCHRNFHRRE.

In terms of assembly, homo- and heterodimers. Interacts with ZHD3, ZHD5, ZHD6, ZHD7, ZHD8, ZHD9, ZHD10 and ZHD13. In terms of tissue distribution, mostly expressed in roots, stems and flowers, present in seedlings and leaves, and weakly observed in inflorescence and siliques.

It localises to the cytoplasm. Functionally, inhibits zinc finger homeodomain (ZHD) transcription factors by interacting with them to prevent both their nuclear localization and their DNA-binding properties. Involved in integrating signals from multiple hormones by regulating the expression of specific genes. Promotes the formation of ectopic shoot meristems on leaf margins. The polypeptide is Mini zinc finger protein 3 (MIF3) (Arabidopsis thaliana (Mouse-ear cress)).